An 84-amino-acid polypeptide reads, in one-letter code: uncharacterized protein (84 aa).

Residues Ile7 to Ile62 form the HTH cro/C1-type domain. A DNA-binding region (H-T-H motif) is located at residues Val18–Asn37.

This is an uncharacterized protein from Bacillus subtilis (strain 168).